We begin with the raw amino-acid sequence, 158 residues long: Ribosome-binding factor A (158 aa).

The interval 130–158 (TAQYAGDADPYKHDDEAEAEGDEFESDEE) is disordered. Residues 145–158 (EAEAEGDEFESDEE) are compositionally biased toward acidic residues.

Belongs to the RbfA family. As to quaternary structure, monomer. Binds 30S ribosomal subunits, but not 50S ribosomal subunits or 70S ribosomes.

It localises to the cytoplasm. Functionally, one of several proteins that assist in the late maturation steps of the functional core of the 30S ribosomal subunit. Associates with free 30S ribosomal subunits (but not with 30S subunits that are part of 70S ribosomes or polysomes). Required for efficient processing of 16S rRNA. May interact with the 5'-terminal helix region of 16S rRNA. The sequence is that of Ribosome-binding factor A from Bifidobacterium longum subsp. infantis (strain ATCC 15697 / DSM 20088 / JCM 1222 / NCTC 11817 / S12).